The chain runs to 322 residues: Cell division control protein 10 (322 aa).

Met-1 is subject to N-acetylmethionine. One can recognise a Septin-type G domain in the interval 29 to 302 (KGFQFNIMVV…EGFRARQLIA (274 aa)). A G1 motif region spans residues 39–46 (GQSGLGKS). Residues 39–46 (GQSGLGKS), Thr-74, Gly-100, and 180–188 (KSDTLTLDE) contribute to the GTP site. The G3 motif stretch occupies residues 97–100 (DTPG). The tract at residues 179-182 (GKSD) is G4 motif. Thr-216 carries the post-translational modification Phosphothreonine. Residues Gly-236 and Arg-251 each coordinate GTP.

Belongs to the TRAFAC class TrmE-Era-EngA-EngB-Septin-like GTPase superfamily. Septin GTPase family. As to quaternary structure, component of the septin complex which consists of CDC3, CDC10, CDC11, CDC12 and probably SHS1 and rearranges to a cortical collar of highly ordered filaments at the mother-bud-neck. A complex formed by CDC3, CDC10, CDC11 and CDC12 is capable of forming long filaments in vitro and the components seem to be present in a 2:2:2:2 arrangement in vivo. The filaments are proposed to be formed by the end-to-end polymerization of CDC3-CDC12-CDC11 complexes with CDC10 serving as a bridge to bundle the polymers into paired filaments. Component of the GIN4 complex composed of at least BNI5, CDC3, CDC10, CDC11, CDC12, GIN4, NAP1 and SHS1. Self-associates. Interacts with SYP1.

The protein localises to the membrane. It localises to the bud neck. Septins are GTPases involved in cytokinesis that assemble early in the cell cycle as a patch at the incipient bud site and form a ring approximate 15 minutes before bud emergence, which transforms into an hour-glass shaped collar of cortical filaments that spans both sides of the mother-bud neck. This collar persists until just before cytokinesis, when it splits into two rings that occupy opposite sides of the neck. The septins at the bud neck serve as a structural scaffold that recruits different components involved in diverse processes at specific stages during the cell cycle. Many proteins bind asymmetrically to the septin collar. The septin assembly is regulated by protein kinases GIN4 and/or CLA4. May act by recruiting MYO1 and HOF1, a protein involved in septation, to the site of cleavage. Septins are also involved in cell morphogenesis, bud site selection, chitin deposition, cell cycle regulation, cell compartmentalization and spore wall formation. This is Cell division control protein 10 (CDC10) from Saccharomyces cerevisiae (strain ATCC 204508 / S288c) (Baker's yeast).